Reading from the N-terminus, the 271-residue chain is Solute carrier family 66 member 2 (271 aa).

3 helical membrane passes run W8–G28, F49–F69, and P76–T96. The region spanning H14–Q80 is the PQ-loop 1 domain. S110 bears the Phosphoserine mark. A run of 3 helical transmembrane segments spans residues D145–I165, A168–P188, and V232–A252. The PQ-loop 2 domain occupies A178–C233.

The protein resides in the membrane. In Homo sapiens (Human), this protein is Solute carrier family 66 member 2.